Here is a 631-residue protein sequence, read N- to C-terminus: Phosphomethylpyrimidine synthase (631 aa).

Substrate-binding positions include asparagine 239, methionine 268, tyrosine 297, histidine 333, 353–355 (SRG), 394–397 (DGLR), and glutamate 433. Histidine 437 contacts Zn(2+). Tyrosine 460 is a substrate binding site. Position 501 (histidine 501) interacts with Zn(2+). [4Fe-4S] cluster is bound by residues cysteine 581, cysteine 584, and cysteine 589.

Belongs to the ThiC family. Homodimer. Requires [4Fe-4S] cluster as cofactor.

The enzyme catalyses 5-amino-1-(5-phospho-beta-D-ribosyl)imidazole + S-adenosyl-L-methionine = 4-amino-2-methyl-5-(phosphooxymethyl)pyrimidine + CO + 5'-deoxyadenosine + formate + L-methionine + 3 H(+). Its pathway is cofactor biosynthesis; thiamine diphosphate biosynthesis. Its function is as follows. Catalyzes the synthesis of the hydroxymethylpyrimidine phosphate (HMP-P) moiety of thiamine from aminoimidazole ribotide (AIR) in a radical S-adenosyl-L-methionine (SAM)-dependent reaction. This is Phosphomethylpyrimidine synthase from Escherichia coli O127:H6 (strain E2348/69 / EPEC).